The following is a 116-amino-acid chain: Large ribosomal subunit protein uL18 (116 aa).

Belongs to the universal ribosomal protein uL18 family. In terms of assembly, part of the 50S ribosomal subunit; part of the 5S rRNA/L5/L18/L25 subcomplex. Contacts the 5S and 23S rRNAs.

This is one of the proteins that bind and probably mediate the attachment of the 5S RNA into the large ribosomal subunit, where it forms part of the central protuberance. The protein is Large ribosomal subunit protein uL18 of Ectopseudomonas mendocina (strain ymp) (Pseudomonas mendocina).